We begin with the raw amino-acid sequence, 74 residues long: ATP synthase subunit 9, mitochondrial (74 aa).

The next 2 helical transmembrane spans lie at Ile8–Phe28 and Leu45–Phe72.

Belongs to the ATPase C chain family. F-type ATPases have 2 components, CF(1) - the catalytic core - and CF(0) - the membrane proton channel. CF(1) has five subunits: alpha(3), beta(3), gamma(1), delta(1), epsilon(1). CF(0) has three main subunits: a, b and c.

It localises to the mitochondrion membrane. Its function is as follows. This protein is one of the chains of the nonenzymatic membrane component (F0) of mitochondrial ATPase. In Pisum sativum (Garden pea), this protein is ATP synthase subunit 9, mitochondrial (ATP9).